Consider the following 420-residue polypeptide: Probable secreted beta-glucosidase SUN4 (420 aa).

Positions 1-24 are cleaved as a signal peptide; it reads MKLSATTLTAASLIGYSTIVSALP. A disordered region spans residues 89 to 145; the sequence is TKSSSKVASSSESTEQIATTSSSAQTTLTSSETSTSESSVPISTSGSASTSSAASSA. N-linked (GlcNAc...) asparagine glycosylation occurs at asparagine 395.

This sequence belongs to the SUN family. In terms of processing, glycosylated.

It localises to the secreted. It is found in the cell wall. Its function is as follows. Involved in the remodeling of the cell wall during the various phases of yeast culture development and under various environmental conditions and plays a role in septation. The polypeptide is Probable secreted beta-glucosidase SUN4 (SUN4) (Saccharomyces cerevisiae (strain ATCC 204508 / S288c) (Baker's yeast)).